The chain runs to 325 residues: MSPKNLLKGFKRPKKIEFTTDVNTPNYGKFVAEPFERGIGTTIGNSLRRTLMSSIEGAAISAIRIEGVSHEFSYIEGVAEDVTRIILNLKQVRIKYEPEDKEASKVIHLELKGAGYFRAADLAVDSSIEIMNPDLHIATLNEDANLIMDLEIQRGRGYVPAEDKKKDIEVLGTIPIDSIFSPIQKVLFEVSETRVAQRSDYEKLTMEVWTDGSVSPEDAVAQAAKILKDHLTVFINFEEEIEEEEEELDEADEKLKAALSKHVEELELSVRSTNVLRSLEIDFIGELVKRSEDEMTKSKHFSEQSLLELKAKLSSMGLSFGMRDF.

The tract at residues 1-238 (MSPKNLLKGF…DHLTVFINFE (238 aa)) is alpha N-terminal domain (alpha-NTD). Residues 255 to 325 (LKAALSKHVE…MGLSFGMRDF (71 aa)) form an alpha C-terminal domain (alpha-CTD) region.

Belongs to the RNA polymerase alpha chain family. Homodimer. The RNAP catalytic core consists of 2 alpha, 1 beta, 1 beta' and 1 omega subunit. When a sigma factor is associated with the core the holoenzyme is formed, which can initiate transcription.

The enzyme catalyses RNA(n) + a ribonucleoside 5'-triphosphate = RNA(n+1) + diphosphate. Functionally, DNA-dependent RNA polymerase catalyzes the transcription of DNA into RNA using the four ribonucleoside triphosphates as substrates. This is DNA-directed RNA polymerase subunit alpha from Leptospira biflexa serovar Patoc (strain Patoc 1 / Ames).